The chain runs to 357 residues: Cinnamyl alcohol dehydrogenase 7 (357 aa).

Cysteine 46 contributes to the Zn(2+) binding site. Threonine 48 is a binding site for NADP(+). Zn(2+) contacts are provided by histidine 68, glutamate 69, cysteine 99, cysteine 102, cysteine 105, cysteine 113, and cysteine 162. NADP(+) contacts are provided by residues threonine 166, 187–192 (GLGGLG), 210–215 (STSERK), threonine 250, glycine 274, and 297–299 (SMV).

This sequence belongs to the zinc-containing alcohol dehydrogenase family. Homodimer. Zn(2+) is required as a cofactor. In terms of tissue distribution, expressed in the differentiation and elongation zones of primary and lateral roots. Expressed in the hypocotyl, cotyledon and leaf veins, hydathodes and trichomes. In stems, expressed in the vascular cambium region. Expressed in the style, anthers, stamen filaments, vascular tissues of sepals and stigmatic regions in flowers, and abscission, style and stigmatic regions of siliques and seed testa.

It catalyses the reaction (E)-cinnamyl alcohol + NADP(+) = (E)-cinnamaldehyde + NADPH + H(+). It participates in aromatic compound metabolism; phenylpropanoid biosynthesis. In terms of biological role, involved in lignin biosynthesis. Catalyzes the final step specific for the production of lignin monomers. Catalyzes the NADPH-dependent reduction of coniferaldehyde, 5-hydroxyconiferaldehyde, sinapaldehyde, 4-coumaraldehyde and caffeyl aldehyde to their respective alcohols. The polypeptide is Cinnamyl alcohol dehydrogenase 7 (CAD7) (Arabidopsis thaliana (Mouse-ear cress)).